The sequence spans 338 residues: GTPase Obg (338 aa).

An Obg domain is found at 1–159 (MSFIDEVKIH…RWLRLELKLM (159 aa)). Residues 160–331 (ADVGLLGMPS…LLDEIARQLW (172 aa)) enclose the OBG-type G domain. GTP is bound by residues 166 to 173 (GMPSVGKS), 191 to 195 (FTTLK), 213 to 216 (DIPG), 283 to 286 (NKMD), and 312 to 314 (SAA). Mg(2+) contacts are provided by serine 173 and threonine 193.

Belongs to the TRAFAC class OBG-HflX-like GTPase superfamily. OBG GTPase family. Monomer. It depends on Mg(2+) as a cofactor.

It localises to the cytoplasm. In terms of biological role, an essential GTPase which binds GTP, GDP and possibly (p)ppGpp with moderate affinity, with high nucleotide exchange rates and a fairly low GTP hydrolysis rate. Plays a role in control of the cell cycle, stress response, ribosome biogenesis and in those bacteria that undergo differentiation, in morphogenesis control. This is GTPase Obg from Geotalea daltonii (strain DSM 22248 / JCM 15807 / FRC-32) (Geobacter daltonii).